Reading from the N-terminus, the 75-residue chain is Iota-conotoxin-like R11.3 (75 aa).

The N-terminal stretch at 1–19 (MKLCLTFLLVLMILASVTG) is a signal peptide. Residues 20 to 34 (EKLSEQTLRRAARKN) constitute a propeptide that is removed on maturation. 4 disulfides stabilise this stretch: Cys39–Cys53, Cys46–Cys58, Cys52–Cys63, and Cys57–Cys70.

The protein belongs to the conotoxin I1 superfamily. Expressed by the venom duct.

Its subcellular location is the secreted. Its function is as follows. Iota-conotoxins bind to voltage-gated sodium channels (Nav) and act as agonists by shifting the voltage-dependence of activation to more hyperpolarized levels. Produces general excitatory symptoms. In Conus radiatus (Rayed cone), this protein is Iota-conotoxin-like R11.3.